A 479-amino-acid polypeptide reads, in one-letter code: ATP synthase subunit beta (479 aa).

162–169 (GGAGVGKT) contacts ATP.

The protein belongs to the ATPase alpha/beta chains family. As to quaternary structure, F-type ATPases have 2 components, CF(1) - the catalytic core - and CF(0) - the membrane proton channel. CF(1) has five subunits: alpha(3), beta(3), gamma(1), delta(1), epsilon(1). CF(0) has three main subunits: a(1), b(2) and c(9-12). The alpha and beta chains form an alternating ring which encloses part of the gamma chain. CF(1) is attached to CF(0) by a central stalk formed by the gamma and epsilon chains, while a peripheral stalk is formed by the delta and b chains.

It localises to the cell membrane. It carries out the reaction ATP + H2O + 4 H(+)(in) = ADP + phosphate + 5 H(+)(out). In terms of biological role, produces ATP from ADP in the presence of a proton gradient across the membrane. The catalytic sites are hosted primarily by the beta subunits. The sequence is that of ATP synthase subunit beta from Mesoplasma florum (strain ATCC 33453 / NBRC 100688 / NCTC 11704 / L1) (Acholeplasma florum).